We begin with the raw amino-acid sequence, 150 residues long: Large ribosomal subunit protein bL9 (150 aa).

This sequence belongs to the bacterial ribosomal protein bL9 family.

In terms of biological role, binds to the 23S rRNA. The chain is Large ribosomal subunit protein bL9 from Streptococcus gordonii (strain Challis / ATCC 35105 / BCRC 15272 / CH1 / DL1 / V288).